A 401-amino-acid polypeptide reads, in one-letter code: Beta-ketoadipyl-CoA thiolase (401 aa).

Catalysis depends on Cys-90, which acts as the Acyl-thioester intermediate. Residues His-357 and Cys-387 each act as proton acceptor in the active site.

It belongs to the thiolase-like superfamily. Thiolase family.

The catalysed reaction is succinyl-CoA + acetyl-CoA = 3-oxoadipyl-CoA + CoA. Its pathway is aromatic compound metabolism; phenylacetate degradation. Catalyzes thiolytic cleavage of beta-ketoadipyl-CoA to succinyl-CoA and acetyl-CoA. The polypeptide is Beta-ketoadipyl-CoA thiolase (paaJ) (Escherichia coli).